Here is a 202-residue protein sequence, read N- to C-terminus: Small ribosomal subunit protein uS4 (202 aa).

The disordered stretch occupies residues 22–43 (TRKSARRAYPPGQHGQNRKKRS). In terms of domain architecture, S4 RNA-binding spans 90–152 (MRLDNTVFRL…APSRKLVENN (63 aa)).

Belongs to the universal ribosomal protein uS4 family. Part of the 30S ribosomal subunit. Contacts protein S5. The interaction surface between S4 and S5 is involved in control of translational fidelity.

One of the primary rRNA binding proteins, it binds directly to 16S rRNA where it nucleates assembly of the body of the 30S subunit. Functionally, with S5 and S12 plays an important role in translational accuracy. This is Small ribosomal subunit protein uS4 from Trichormus variabilis (strain ATCC 29413 / PCC 7937) (Anabaena variabilis).